The chain runs to 470 residues: Neuraminidase (470 aa).

The Intravirion portion of the chain corresponds to M1–K6. Residues I7–G27 traverse the membrane as a helical segment. Residues G11–W33 form an involved in apical transport and lipid raft association region. Over N28–K470 the chain is Virion surface. The segment at H36–S90 is hypervariable stalk region. N44, N58, N63, N70, and N88 each carry an N-linked (GlcNAc...) asparagine; by host glycan. Positions L91–K470 are head of neuraminidase. Disulfide bonds link C92–C417, C124–C129, C184–C231, C233–C238, C279–C292, C281–C290, C318–C335, and C421–C447. R118 is a substrate binding site. Residue N146 is glycosylated (N-linked (GlcNAc...) asparagine; by host). Catalysis depends on D151, which acts as the Proton donor/acceptor. R152 is a substrate binding site. N235 carries N-linked (GlcNAc...) asparagine; by host glycosylation. A substrate-binding site is contributed by E277–E278. Position 293 (R293) interacts with substrate. Ca(2+) is bound by residues D294, G298, and D324. Position 368 (R368) interacts with substrate. The active-site Nucleophile is the Y402. N434 and N455 each carry an N-linked (GlcNAc...) asparagine; by host glycan.

The protein belongs to the glycosyl hydrolase 34 family. In terms of assembly, homotetramer. The cofactor is Ca(2+). Post-translationally, N-glycosylated.

The protein resides in the virion membrane. It localises to the host apical cell membrane. The enzyme catalyses Hydrolysis of alpha-(2-&gt;3)-, alpha-(2-&gt;6)-, alpha-(2-&gt;8)- glycosidic linkages of terminal sialic acid residues in oligosaccharides, glycoproteins, glycolipids, colominic acid and synthetic substrates.. Its activity is regulated as follows. Inhibited by the neuraminidase inhibitors zanamivir (Relenza) and oseltamivir (Tamiflu). These drugs interfere with the release of progeny virus from infected cells and are effective against all influenza strains. Resistance to neuraminidase inhibitors is quite rare. In terms of biological role, catalyzes the removal of terminal sialic acid residues from viral and cellular glycoconjugates. Cleaves off the terminal sialic acids on the glycosylated HA during virus budding to facilitate virus release. Additionally helps virus spread through the circulation by further removing sialic acids from the cell surface. These cleavages prevent self-aggregation and ensure the efficient spread of the progeny virus from cell to cell. Otherwise, infection would be limited to one round of replication. Described as a receptor-destroying enzyme because it cleaves a terminal sialic acid from the cellular receptors. May facilitate viral invasion of the upper airways by cleaving the sialic acid moieties on the mucin of the airway epithelial cells. Likely to plays a role in the budding process through its association with lipid rafts during intracellular transport. May additionally display a raft-association independent effect on budding. Plays a role in the determination of host range restriction on replication and virulence. Sialidase activity in late endosome/lysosome traffic seems to enhance virus replication. This chain is Neuraminidase, found in Influenza A virus (strain A/USA:Memphis/10/1996 H1N1).